The following is an 82-amino-acid chain: MSGKPNERPFSDIITSIRYWVIHSITIPSLFIAGWLFVSTGLAYDIFGAPRPNEYFTEDRQDAPLITDRFNALEQVKQLSQQ.

The helical transmembrane segment at 21-35 threads the bilayer; it reads VIHSITIPSLFIAGW. Residue histidine 23 coordinates heme.

This sequence belongs to the PsbE/PsbF family. Heterodimer of an alpha subunit and a beta subunit. PSII is composed of 1 copy each of membrane proteins PsbA, PsbB, PsbC, PsbD, PsbE, PsbF, PsbH, PsbI, PsbJ, PsbK, PsbL, PsbM, PsbT, PsbX, PsbY, PsbZ, Psb30/Ycf12, at least 3 peripheral proteins of the oxygen-evolving complex and a large number of cofactors. It forms dimeric complexes. Heme b is required as a cofactor.

It is found in the plastid. Its subcellular location is the chloroplast thylakoid membrane. Functionally, this b-type cytochrome is tightly associated with the reaction center of photosystem II (PSII). PSII is a light-driven water:plastoquinone oxidoreductase that uses light energy to abstract electrons from H(2)O, generating O(2) and a proton gradient subsequently used for ATP formation. It consists of a core antenna complex that captures photons, and an electron transfer chain that converts photonic excitation into a charge separation. This Stigeoclonium helveticum (Green alga) protein is Cytochrome b559 subunit alpha.